The sequence spans 216 residues: Adenylate kinase (216 aa).

An ATP-binding site is contributed by 10–15; the sequence is GAGKGT. The tract at residues 30-59 is NMP; the sequence is STGDMFRAAMKAETELGLQAKSFIDKGALV. AMP contacts are provided by residues Thr31, Arg36, 57-59, 85-88, and Gln92; these read ALV and GFPR. Residues 126 to 163 form an LID region; it reads GRRICKECGATYHLEFNPPAKADVCDKCGGELYQRSDD. Arg127 contacts ATP. Zn(2+)-binding residues include Cys130 and Cys133. Residue 136-137 coordinates ATP; sequence TY. 2 residues coordinate Zn(2+): Cys150 and Cys153. 2 residues coordinate AMP: Arg160 and Arg171. Gln199 serves as a coordination point for ATP.

Belongs to the adenylate kinase family. In terms of assembly, monomer.

It localises to the cytoplasm. The enzyme catalyses AMP + ATP = 2 ADP. It functions in the pathway purine metabolism; AMP biosynthesis via salvage pathway; AMP from ADP: step 1/1. Catalyzes the reversible transfer of the terminal phosphate group between ATP and AMP. Plays an important role in cellular energy homeostasis and in adenine nucleotide metabolism. The polypeptide is Adenylate kinase (Bacillus cytotoxicus (strain DSM 22905 / CIP 110041 / 391-98 / NVH 391-98)).